The primary structure comprises 115 residues: Viral Lymphotactin (115 aa).

An N-terminal signal peptide occupies residues 1–19; it reads MRLLTILALCCVAIWVVES. A disulfide bridge links cysteine 30 with cysteine 67.

This sequence belongs to the intercrine gamma family. Interacts with host XCR1. N-glycosylated and O-glycosylated.

The protein resides in the secreted. Chemoattractant for CD4-dendritic cells, but not for CD4+ dendritic cells, T-cells or B-cells. This is Viral Lymphotactin (vXCL1) from Rat cytomegalovirus (isolate England) (RCMV-E).